The following is a 307-amino-acid chain: Chlorophyll a-b binding protein 1, chloroplastic (307 aa).

The transit peptide at 1-44 (MAPYSVVASVLAAAPPQQSGSVRQLPSTINRAITQRSQSRHVAS) directs the protein to the chloroplast. Residues 34-54 (TQRSQSRHVASASSASSPTTM) form a disordered region. Residues T52, E63, I64, G65, Y68, L81, P86, R89, G90, F91, and D92 each contribute to the chlorophyll a site. Position 96 (L96) interacts with loroxanthin. A helical membrane pass occupies residues 111-143 (NYDESRLRWLLEGELYNGRLAMLAVVGVLTVEA). Residues L120, E124, N127, M132, and K146 each contribute to the chlorophyll a site. Residue W149 participates in loroxanthin binding. Chlorophyll a contacts are provided by E151, Y163, H171, E178, R181, E190, R198, and D200. Residues 161-186 (TPYVVAVVGGHLAFALLEKKRLENFR) form a helical membrane-spanning segment. 2 residues coordinate all-trans-violaxanthin: D200 and L202. L204, N208, Y214, N215, A218, N222, and R224 together coordinate chlorophyll a. Residues 213-238 (DYNRQAEVRNCRLAMLTFLGFSVQAW) traverse the membrane as a helical segment. F230 contacts loroxanthin. F233 provides a ligand contact to all-trans-violaxanthin. Chlorophyll a is bound at residue Q236. Residue P244 coordinates all-trans-violaxanthin. Residues N247, H251, P255, F256, A258, N259, I260, and F274 each coordinate chlorophyll a. Residues 265–289 (DRGTNVVAIFSAFAAVMHIAELARE) traverse the membrane as a helical segment.

The protein belongs to the light-harvesting chlorophyll a/b-binding (LHC) protein family. Homooligomer. Component of a light-harvesting complex (LHC) consisting of 11 chlorophyll a-b binding proteins. The cofactor is Binds 11 chlorophylls (Chl-a and Chl-b) and the 2 carotenoids violaxanthin and loroxanthin..

Its subcellular location is the plastid. The protein resides in the chloroplast thylakoid membrane. In terms of biological role, component of a light-harvesting complex (LHC). The LHC functions as a light receptor, it captures and delivers excitation energy to photosystems with which it is closely associated. Functions in a far-red LHC by absorbing far-red light and promoting photosystem II (PSII) excitation, likely with entropy-driven uphill excitation energy transfer. Exhibits a typical absorption band at 671 nm (Qy band), as well as a large far-red absorption band at 706.5 together with fluorescence emission at around 713 nm (F713). In Prasiola crispa (Green alga), this protein is Chlorophyll a-b binding protein 1, chloroplastic.